A 361-amino-acid polypeptide reads, in one-letter code: NAD(P)H-quinone oxidoreductase subunit 1, chloroplastic (361 aa).

A run of 7 helical transmembrane segments spans residues 28–48, 99–119, 128–148, 249–269, 270–290, 301–321, and 341–361; these read IWVLIPILTLVLGITLGVLVI, FTIGPSIAVISILLSYSVIPF, LSIGVFLWIAVSSLAPIGLLM, YSGIKFGLFYVASYLNLLVSS, LFVTVLYLGGWNLSIPYLFVP, TIICIFITLAKTYLFLFISIA, and FLLPISLGNLLLTTSFQLLSL.

The protein belongs to the complex I subunit 1 family. As to quaternary structure, NDH is composed of at least 16 different subunits, 5 of which are encoded in the nucleus.

The protein localises to the plastid. Its subcellular location is the chloroplast thylakoid membrane. The enzyme catalyses a plastoquinone + NADH + (n+1) H(+)(in) = a plastoquinol + NAD(+) + n H(+)(out). The catalysed reaction is a plastoquinone + NADPH + (n+1) H(+)(in) = a plastoquinol + NADP(+) + n H(+)(out). Its function is as follows. NDH shuttles electrons from NAD(P)H:plastoquinone, via FMN and iron-sulfur (Fe-S) centers, to quinones in the photosynthetic chain and possibly in a chloroplast respiratory chain. The immediate electron acceptor for the enzyme in this species is believed to be plastoquinone. Couples the redox reaction to proton translocation, and thus conserves the redox energy in a proton gradient. In Jasminum nudiflorum (Winter jasmine), this protein is NAD(P)H-quinone oxidoreductase subunit 1, chloroplastic.